A 313-amino-acid polypeptide reads, in one-letter code: HPr kinase/phosphorylase (313 aa).

Residues H140 and K161 contribute to the active site. 155–162 (GDSGVGKS) provides a ligand contact to ATP. S162 serves as a coordination point for Mg(2+). The active-site Proton acceptor; for phosphorylation activity. Proton donor; for dephosphorylation activity is D179. The tract at residues 203–212 (LEIRGIGIID) is important for the catalytic mechanism of both phosphorylation and dephosphorylation. E204 is a Mg(2+) binding site. Residue R245 is part of the active site. Residues 266-271 (PVKVGR) form an important for the catalytic mechanism of dephosphorylation region.

It belongs to the HPrK/P family. As to quaternary structure, homohexamer. The cofactor is Mg(2+).

It catalyses the reaction [HPr protein]-L-serine + ATP = [HPr protein]-O-phospho-L-serine + ADP + H(+). The catalysed reaction is [HPr protein]-O-phospho-L-serine + phosphate + H(+) = [HPr protein]-L-serine + diphosphate. Catalyzes the ATP- as well as the pyrophosphate-dependent phosphorylation of a specific serine residue in HPr, a phosphocarrier protein of the phosphoenolpyruvate-dependent sugar phosphotransferase system (PTS). HprK/P also catalyzes the pyrophosphate-producing, inorganic phosphate-dependent dephosphorylation (phosphorolysis) of seryl-phosphorylated HPr (P-Ser-HPr). The two antagonistic activities of HprK/P are regulated by several intracellular metabolites, which change their concentration in response to the absence or presence of rapidly metabolisable carbon sources (glucose, fructose, etc.) in the growth medium. Therefore, by controlling the phosphorylation state of HPr, HPrK/P is a sensor enzyme that plays a major role in the regulation of carbon metabolism and sugar transport: it mediates carbon catabolite repression (CCR), and regulates PTS-catalyzed carbohydrate uptake and inducer exclusion. This chain is HPr kinase/phosphorylase, found in Latilactobacillus sakei subsp. sakei (strain 23K) (Lactobacillus sakei subsp. sakei).